The sequence spans 626 residues: Interferon-induced GTP-binding protein MxC (626 aa).

Positions 40-313 constitute a Dynamin-type G domain; it reads DLNLPAIAVI…LVEHIAKNVP (274 aa). A G1 motif region spans residues 50–57; it reads GDQSSGKS. 50 to 57 serves as a coordination point for GTP; sequence GDQSSGKS. The G2 motif stretch occupies residues 75–77; it reads VTR. Residues 151–154 form a G3 motif region; the sequence is DLPG. GTP contacts are provided by residues 151–155 and 220–223; these read DLPGI and TKPD. A G4 motif region spans residues 220–223; the sequence is TKPD. Positions 252 to 255 are G5 motif; the sequence is KCRG. The GED domain occupies 534–624; it reads LRETAFHLTS…ALPKVVHSAN (91 aa).

The protein belongs to the TRAFAC class dynamin-like GTPase superfamily. Dynamin/Fzo/YdjA family.

Its subcellular location is the cytoplasm. The chain is Interferon-induced GTP-binding protein MxC (mxc) from Danio rerio (Zebrafish).